The chain runs to 388 residues: Yellow-related salivary protein SP03 (388 aa).

An N-terminal signal peptide occupies residues 1–18; sequence MKIFLCLIAVVSLQGVLA. The N-linked (GlcNAc...) asparagine glycan is linked to Asn29.

It belongs to the major royal jelly protein family. Female salivary gland (at protein level).

Its subcellular location is the secreted. In terms of biological role, probably modulates blood feeding of sand flies on vertebrate species by binding and sequestering different mediators involved in the host response. Binds biogenic amines. Binds noradrenaline with medium affinity. Binds octopamine with low affinity. Poorly binds histamine, adrenaline and serotonin. This is Yellow-related salivary protein SP03 from Phlebotomus perniciosus (Phlebotomine sand fly).